Reading from the N-terminus, the 404-residue chain is Cysteine desulfurase IscS (404 aa).

Pyridoxal 5'-phosphate is bound by residues 75 to 76 (AT), Asn155, Gln183, and 203 to 205 (SGH). Lys206 bears the N6-(pyridoxal phosphate)lysine mark. Residue Thr243 participates in pyridoxal 5'-phosphate binding. Residue Cys328 is the Cysteine persulfide intermediate of the active site. Cys328 serves as a coordination point for [2Fe-2S] cluster.

It belongs to the class-V pyridoxal-phosphate-dependent aminotransferase family. NifS/IscS subfamily. Homodimer. Forms a heterotetramer with IscU, interacts with other sulfur acceptors. Pyridoxal 5'-phosphate serves as cofactor.

The protein resides in the cytoplasm. The enzyme catalyses (sulfur carrier)-H + L-cysteine = (sulfur carrier)-SH + L-alanine. Its pathway is cofactor biosynthesis; iron-sulfur cluster biosynthesis. In terms of biological role, master enzyme that delivers sulfur to a number of partners involved in Fe-S cluster assembly, tRNA modification or cofactor biosynthesis. Catalyzes the removal of elemental sulfur atoms from cysteine to produce alanine. Functions as a sulfur delivery protein for Fe-S cluster synthesis onto IscU, an Fe-S scaffold assembly protein, as well as other S acceptor proteins. The polypeptide is Cysteine desulfurase IscS (Shewanella sp. (strain ANA-3)).